A 1946-amino-acid polypeptide reads, in one-letter code: 1,3-beta-glucan synthase component (1946 aa).

2 disordered regions span residues 1 to 127 and 152 to 198; these read MSGY…FSDF and YGEG…KEPY. Low complexity-rich tracts occupy residues 24–34, 43–60, and 91–109; these read GYYQDDQYYDQ, GDHA…QGDG, and DDYY…NQGY. Residues 165 to 180 are compositionally biased toward polar residues; the sequence is QLSYGGNRSSGASTPN. 2 N-linked (GlcNAc...) asparagine glycosylation sites follow: N171 and N290. Residues 297-316 are disordered; sequence KRKAKKGKKKGGEAGNEAET. The next 6 helical transmembrane spans lie at 489–509, 537–557, 576–596, 618–638, 675–695, and 734–754; these read WFHL…MFWF, FSIV…ATLA, LLFL…VFMF, IGIV…VMPL, FGLW…YLTL, and IVLI…TYLF. N-linked (GlcNAc...) asparagine glycosylation is found at N1017 and N1312. 5 consecutive transmembrane segments (helical) span residues 1356 to 1376, 1413 to 1433, 1500 to 1520, 1523 to 1543, and 1615 to 1635; these read NMFI…IGAL, CIIS…VQEL, FAGQ…FATS, WQPA…SPFL, and IFLT…VAYL. The N-linked (GlcNAc...) asparagine glycan is linked to N1649. Transmembrane regions (helical) follow at residues 1667 to 1687, 1703 to 1723, 1738 to 1758, 1803 to 1823, and 1864 to 1884; these read LAVV…AMFG, FGPV…IIFF, LAGI…IVSL, FSAD…LILI, and AILY…PGVI. An N-linked (GlcNAc...) asparagine glycan is attached at N1918. Positions 1920–1946 are disordered; that stretch reads TEGKTETGTKAGGADASATDASKLRLF. A compositionally biased stretch (low complexity) spans 1925-1940; the sequence is ETGTKAGGADASATDA.

The protein belongs to the glycosyltransferase 48 family. In terms of assembly, component of the 1,3-beta-glucan synthase (GS) complex composed of a catalytic subunit GLS1 and a regulatory subunit RHO1.

Its subcellular location is the membrane. It is found in the cell membrane. It catalyses the reaction [(1-&gt;3)-beta-D-glucosyl](n) + UDP-alpha-D-glucose = [(1-&gt;3)-beta-D-glucosyl](n+1) + UDP + H(+). With respect to regulation, activated by iron ions. Inhibited by manganese, copper and zinc ions. In terms of biological role, catalytic subunit of the 1,3-beta-glucan synthase (GS). Synthesizes 1,3-beta-glucan, a major structural component of the fungal cell wall. Involved in cell wall synthesis, maintenance and remodeling. The chain is 1,3-beta-glucan synthase component from Cordyceps militaris (strain CM01) (Caterpillar fungus).